A 340-amino-acid chain; its full sequence is Thioesterase pkgB (340 aa).

Zn(2+) is bound by residues His97, His99, Asp101, His102, and His205. Asp101 functions as the Proton donor/acceptor in the catalytic mechanism. Residues Ser242 to Ser258 show a composition bias toward low complexity. The segment at Ser242 to Ser271 is disordered.

Belongs to the metallo-beta-lactamase superfamily. The cofactor is Zn(2+).

The enzyme catalyses 3,5,7,9,11,13-hexaoxotetradecanoyl-[ACP] = dehydrocitreoisocoumarin + holo-[ACP] + H2O. It carries out the reaction 3,5,7,9,11-pentaoxododecanoyl-[ACP] = 6,8-dihydroxy-3-(2-oxopropyl)-isocoumarin + holo-[ACP] + H2O. In terms of biological role, thioesterase; part of the pkg gene cluster that mediates the biosynthesis of dihydrocitreoisocoumarin and 6,8-dihydroxy-3-(2-oxopropyl)-isocoumarin. The non-reducing polyketide synthase pkgA performs the condensation of one acetyl-CoA starter unit with 6 and 5 malonyl-CoA units, respectively. As pkgA lacks a releasing domain, the thioesterase pkgB is necessary to break the thioester bond and release dihydrocitreoisocoumarin and 6,8-dihydroxy-3-(2-oxopropyl)-isocoumarin from pkgA. The chain is Thioesterase pkgB from Emericella nidulans (strain FGSC A4 / ATCC 38163 / CBS 112.46 / NRRL 194 / M139) (Aspergillus nidulans).